Consider the following 176-residue polypeptide: ATP synthase subunit delta (176 aa).

This sequence belongs to the ATPase delta chain family. As to quaternary structure, F-type ATPases have 2 components, F(1) - the catalytic core - and F(0) - the membrane proton channel. F(1) has five subunits: alpha(3), beta(3), gamma(1), delta(1), epsilon(1). F(0) has three main subunits: a(1), b(2) and c(10-14). The alpha and beta chains form an alternating ring which encloses part of the gamma chain. F(1) is attached to F(0) by a central stalk formed by the gamma and epsilon chains, while a peripheral stalk is formed by the delta and b chains.

The protein localises to the cell inner membrane. Functionally, f(1)F(0) ATP synthase produces ATP from ADP in the presence of a proton or sodium gradient. F-type ATPases consist of two structural domains, F(1) containing the extramembraneous catalytic core and F(0) containing the membrane proton channel, linked together by a central stalk and a peripheral stalk. During catalysis, ATP synthesis in the catalytic domain of F(1) is coupled via a rotary mechanism of the central stalk subunits to proton translocation. In terms of biological role, this protein is part of the stalk that links CF(0) to CF(1). It either transmits conformational changes from CF(0) to CF(1) or is implicated in proton conduction. In Nitratiruptor sp. (strain SB155-2), this protein is ATP synthase subunit delta.